A 307-amino-acid chain; its full sequence is MSKSPKHFLDINELPLSELKSMLDASSAMKAKQKAHQPVRPLEGKTLAMIFERPSTRTRVSFDVAMRQLGGEPIMLTGAEMQLGRGETIADTARVLSRYVDAIMIRILNHDALLELAANATVPVINGLTRRSHPCQVMADLLTYQEHRGPIEGRTVAWTGDDNNVLASWAHAAERFKFQLNVATPPELAPKKAMRDWIKASGAPIMLGTDPEAAVRGADCVVTDTWVSMGDKEGEHRHNVLKPYQVNAKLMSLAKPDALFMHCLPAHRGEEVTDEVIDGPQSVVFDEAENRLHAQKGILAWCFDAVK.

Residues 55–58 (STRT), Gln-82, Arg-106, and 133–136 (HPCQ) contribute to the carbamoyl phosphate site. Residues Asn-164, Asp-224, and 228–229 (SM) each bind L-ornithine. Carbamoyl phosphate-binding positions include 263–264 (CL) and Arg-291.

Belongs to the aspartate/ornithine carbamoyltransferase superfamily. OTCase family.

Its subcellular location is the cytoplasm. It catalyses the reaction carbamoyl phosphate + L-ornithine = L-citrulline + phosphate + H(+). It functions in the pathway amino-acid biosynthesis; L-arginine biosynthesis; L-arginine from L-ornithine and carbamoyl phosphate: step 1/3. In terms of biological role, reversibly catalyzes the transfer of the carbamoyl group from carbamoyl phosphate (CP) to the N(epsilon) atom of ornithine (ORN) to produce L-citrulline. This Bradyrhizobium diazoefficiens (strain JCM 10833 / BCRC 13528 / IAM 13628 / NBRC 14792 / USDA 110) protein is Ornithine carbamoyltransferase.